The sequence spans 1783 residues: 6-methylsalicylic acid synthase (1783 aa).

Positions 1-31 (MITSTSSTEVLTPANGSDDSKGTTTPATSSG) are enriched in polar residues. The tract at residues 1–40 (MITSTSSTEVLTPANGSDDSKGTTTPATSSGDPEMHDDLL) is disordered. The 430-residue stretch at 45–474 (HDDVAIIGMA…GTVSHAIIEA (430 aa)) folds into the Ketosynthase family 3 (KS3) domain. Active-site for beta-ketoacyl synthase activity residues include cysteine 217, histidine 352, and histidine 394. Positions 587 to 884 (WVFSGHGAQW…TPTMVRKQPA (298 aa)) are malonyl-CoA:ACP transacylase (MAT) domain. Serine 673 functions as the For acyl/malonyl transferase activity in the catalytic mechanism. Residues 942–1215 (THKPAANDLL…AFAGVEGESL (274 aa)) are product template (PT) domain. Residues 948–1064 (NDLLGTRTAL…ATVGADATPS (117 aa)) are N-terminal hotdog fold. Residues 948–1216 (NDLLGTRTAL…FAGVEGESLS (269 aa)) enclose the PKS/mFAS DH domain. Histidine 980 acts as the Proton acceptor; for dehydratase activity in catalysis. Residues 1078–1216 (PQKLSDSFSI…FAGVEGESLS (139 aa)) are C-terminal hotdog fold. The active-site Proton donor; for dehydratase activity is the aspartate 1130. A Carrier domain is found at 1707–1781 (EYVLVVVKKC…HLVEYFCQVL (75 aa)). Position 1741 is an O-(pantetheine 4'-phosphoryl)serine (serine 1741).

The catalysed reaction is 3 malonyl-CoA + acetyl-CoA + NADPH + 3 H(+) = 6-methylsalicylate + 3 CO2 + NADP(+) + 4 CoA + H2O. It participates in secondary metabolite biosynthesis; terpenoid biosynthesis. In terms of biological role, non-reducing polyketide synthase; part of the gene cluster that mediates the biosynthesis of macrophorins, isoprenoid epoxycyclohexenones containing cyclized drimane moieties. The first step of the pathway is the synthesis of 6-methylsalicylic acid (6-MSA) by the polyketide synthase macA. 6-MSA is then converted to m-cresol by the decarboxylase macB. The cytochrome P450 monooxygenase macC then catalyzes the oxidation of m-cresol to toluquinol. Epoxidation of toluquinol is then performed by the short chain dehydrogenase macD, with the help of macE, and a further prenylation by macG leads to 7-deacetoxyyanuthone A. The next step is the hydroxylation of C-22 of 7-deacetoxyyanuthone A by the cytochrome P450 monooxygenase macH to yield 22-deacetylyanuthone A. O-Mevalon transferase macI then attaches mevalon to the hydroxyl group of 22-deacetylyanuthone A to produce yanuthone E. The terpene cyclase macJ catalyzes the cyclization of 22-deacetylyanuthone A to macrophorin A. MacJ is also able to catalyze cyclization of yanuthone E and 7-deacetoxyyanuthone A to their corresponding macrophorins. The macJ products can be further modified by macH and macJ, as well as by the FAD-dependent monooxygenase macF, to produce additional macrophorins, including 4'-oxomacrophorin A, 4'-oxomacrophorin D and 4'-oxomacrophorin E. The sequence is that of 6-methylsalicylic acid synthase from Penicillium terrestre.